Reading from the N-terminus, the 92-residue chain is MKLLLAIALMLTTVMWASTQQPQAVHTYCGRHLARTLADLCWEAGVDKRSDAQFASYGSAWLMPYSEGRDQRGIVDECCLRPCSVDVLLSYC.

The first 19 residues, 1–19 (MKLLLAIALMLTTVMWAST), serve as a signal peptide directing secretion. The residue at position 20 (glutamine 20) is a Pyrrolidone carboxylic acid. 3 cysteine pairs are disulfide-bonded: cysteine 29/cysteine 79, cysteine 41/cysteine 92, and cysteine 78/cysteine 83. A propeptide spans 50–71 (SDAQFASYGSAWLMPYSEGRDQ) (c peptide like).

This sequence belongs to the insulin family. In terms of assembly, heterodimer of a B chain and an A chain linked by two disulfide bonds.

The protein localises to the secreted. Functionally, brain peptide responsible for activation of prothoracic glands to produce ecdysone in insects. The polypeptide is Bombyxin A-9 (BBXA9) (Bombyx mori (Silk moth)).